We begin with the raw amino-acid sequence, 1257 residues long: MGRKEKMAEKCRKLMTEPGKIRNIGIIAHIDHGKCVAPETKICLADGRFVRADELFEELKERGRLVKCDESEEVYELREPVGVSSLDKDAVEIVEGKITHVWRLKADKLVEVEVKNGRSIRTTPEHKFLVLDPSGEIVEKRADELEIGDYIVCTQKLVHEGMSEEELKREVFRRLGRDFFVHLPEEEAESVLELAKERGIKALWETLEVDIEENSFYYQLRKGRIRADILVDLAEELGLDLADLYDAVEVSYRSNTKSTKPIRLPEPEDLFYLAGLMFGDGCWNQLTNGSEAIQGEVKRIASDMGLEVRVRRYEGKTARIDFPETVPRILEALFDYPRRKKAHRIRVNDFLTRAPLDCIAEFIRGYFDADGTVEEGRSAVSVTSVSREFLEDLQLLLQKFDVASYLREGDGAYTLYVSGARSLERFPGFREPEKAEKLKKLMEKASSSELEKVPISGEILREVRGDVPTTRMFNCYSNYEGGQVGLTKSSLEKVISTLEAVGVEGEALERLKALARDDVCFLEVVRVEEVEYDGYVYDFTVEEHHNFAAEGFVVHNTTLSDQLLAGAGMISEELAGDQLVLDFDEMEQERGITIDAANVSMVHEYEGEEYLINLIDTPGHVDFSGDVTRAMRAVDGAIVVVCAVEGVMPQTETVLRQALRERVRPVLYINKVDRLINELKLSPEEMQNRFLEIISEVNKMIEQMAPEEFKDEWKVSVEDGSVAFGSAYYGWGISFPFMEKTGITFKDIIEYCQQDKQKELAQEAPVYQVVLDMVVKHLPDPVTAQEYRIEQIWPGDPESEDGKTLRKCDPNGKLAMVVTDVRIDEHAGEVATGRVYSGTIREGQQVYLASSKKETRVQQVGIYMGPDRIRTDEVPAGNIAAVTGLRDVWAGETVTDPEDPIEPFEELQHFAEPVVTVAVEAKNTQDLPKLIEILHQIAKEDPTVKVEINEETGQHLVSGMGELHLEIIAHRIKERGVDIKVSEPIVVYREGVFGVCDDEVEGKSPNKHNKFYVTVEPVEEEIVEAIEEGKFNPEEMSKKELEETLMEYGMDRDDAKAVETVKGTNFFLDKTVGLQYLNEVMELLIEGFEEAMEEGPLAKEPCRGVKVSLVDAEIHEDPVHRGPAQVIPAIKRAIYGGMLLADTHLLEPMQYIYVTVPQDYMGAVTKEIQGRRGTIEEIQQEGDTVIIKGKAPVAEMFGFANDIRSATEGRAIWTTEHAGYERVPEELEEQIIREIRERKGLKPEPPKPEDYIEDYGG.

Positions 273–402 constitute a DOD-type homing endonuclease domain; that stretch reads LAGLMFGDGC…LQLLLQKFDV (130 aa). The tr-type G domain maps to 541–782; sequence VEEHHNFAAE…MVVKHLPDPV (242 aa). GTP is bound by residues 616-620 and 670-673; these read DTPGH and NKVD. Histidine 1120 bears the Diphthamide mark. The segment covering 1237-1250 has biased composition (basic and acidic residues); the sequence is ERKGLKPEPPKPED. The tract at residues 1237 to 1257 is disordered; sequence ERKGLKPEPPKPEDYIEDYGG.

Belongs to the TRAFAC class translation factor GTPase superfamily. Classic translation factor GTPase family. EF-G/EF-2 subfamily. This protein undergoes a protein self splicing that involves a post-translational excision of the intervening region (intein) followed by peptide ligation.

The protein localises to the cytoplasm. Functionally, catalyzes the GTP-dependent ribosomal translocation step during translation elongation. During this step, the ribosome changes from the pre-translocational (PRE) to the post-translocational (POST) state as the newly formed A-site-bound peptidyl-tRNA and P-site-bound deacylated tRNA move to the P and E sites, respectively. Catalyzes the coordinated movement of the two tRNA molecules, the mRNA and conformational changes in the ribosome. This chain is Elongation factor 2, found in Methanopyrus kandleri (strain AV19 / DSM 6324 / JCM 9639 / NBRC 100938).